We begin with the raw amino-acid sequence, 432 residues long: Glutamyl-tRNA reductase (432 aa).

Substrate-binding positions include 55–58, S114, 119–121, and Q125; these read TCNR and ETQ. The Nucleophile role is filled by C56. Residue 194-199 coordinates NADP(+); sequence GAGEMI.

It belongs to the glutamyl-tRNA reductase family. In terms of assembly, homodimer.

It carries out the reaction (S)-4-amino-5-oxopentanoate + tRNA(Glu) + NADP(+) = L-glutamyl-tRNA(Glu) + NADPH + H(+). It participates in porphyrin-containing compound metabolism; protoporphyrin-IX biosynthesis; 5-aminolevulinate from L-glutamyl-tRNA(Glu): step 1/2. Functionally, catalyzes the NADPH-dependent reduction of glutamyl-tRNA(Glu) to glutamate 1-semialdehyde (GSA). In Burkholderia multivorans (strain ATCC 17616 / 249), this protein is Glutamyl-tRNA reductase.